Reading from the N-terminus, the 368-residue chain is Cobalt-precorrin-5B C(1)-methyltransferase (368 aa).

This sequence belongs to the CbiD family.

It catalyses the reaction Co-precorrin-5B + S-adenosyl-L-methionine = Co-precorrin-6A + S-adenosyl-L-homocysteine. It participates in cofactor biosynthesis; adenosylcobalamin biosynthesis; cob(II)yrinate a,c-diamide from sirohydrochlorin (anaerobic route): step 6/10. Its function is as follows. Catalyzes the methylation of C-1 in cobalt-precorrin-5B to form cobalt-precorrin-6A. The sequence is that of Cobalt-precorrin-5B C(1)-methyltransferase from Brucella canis (strain ATCC 23365 / NCTC 10854 / RM-666).